The sequence spans 360 residues: Photosystem II protein D1 (360 aa).

The next 3 helical transmembrane spans lie at 29 to 46 (YIGW…TATT), 118 to 133 (HFLL…EWEF), and 142 to 156 (WISV…AASA). Histidine 118 lines the chlorophyll a pocket. Tryptophan 126 lines the pheophytin a pocket. [CaMn4O5] cluster is bound by residues aspartate 170 and glutamate 189. The chain crosses the membrane as a helical span at residues 197-218 (FHQLGVAGVFGGSLFSAMHGSL). Chlorophyll a is bound at residue histidine 198. Residues histidine 215 and 264–265 (SF) each bind a quinone. Histidine 215 contributes to the Fe cation binding site. Fe cation is bound at residue histidine 272. A helical transmembrane segment spans residues 274–288 (FLGLWPVVGIWFTAL). Residues histidine 332, glutamate 333, aspartate 342, and alanine 344 each coordinate [CaMn4O5] cluster. Residues 345 to 360 (AGESLPVALTAPAVNG) constitute a propeptide that is removed on maturation.

Belongs to the reaction center PufL/M/PsbA/D family. In terms of assembly, PSII is composed of 1 copy each of membrane proteins PsbA, PsbB, PsbC, PsbD, PsbE, PsbF, PsbH, PsbI, PsbJ, PsbK, PsbL, PsbM, PsbT, PsbX, PsbY, PsbZ, Psb30/Ycf12, at least 3 peripheral proteins of the oxygen-evolving complex and a large number of cofactors. It forms dimeric complexes. The cofactor is The D1/D2 heterodimer binds P680, chlorophylls that are the primary electron donor of PSII, and subsequent electron acceptors. It shares a non-heme iron and each subunit binds pheophytin, quinone, additional chlorophylls, carotenoids and lipids. D1 provides most of the ligands for the Mn4-Ca-O5 cluster of the oxygen-evolving complex (OEC). There is also a Cl(-1) ion associated with D1 and D2, which is required for oxygen evolution. The PSII complex binds additional chlorophylls, carotenoids and specific lipids.. Tyr-161 forms a radical intermediate that is referred to as redox-active TyrZ, YZ or Y-Z. Post-translationally, C-terminally processed by CTPA; processing is essential to allow assembly of the oxygen-evolving complex and thus photosynthetic growth.

It localises to the plastid. The protein resides in the chloroplast thylakoid membrane. The enzyme catalyses 2 a plastoquinone + 4 hnu + 2 H2O = 2 a plastoquinol + O2. Functionally, photosystem II (PSII) is a light-driven water:plastoquinone oxidoreductase that uses light energy to abstract electrons from H(2)O, generating O(2) and a proton gradient subsequently used for ATP formation. It consists of a core antenna complex that captures photons, and an electron transfer chain that converts photonic excitation into a charge separation. The D1/D2 (PsbA/PsbD) reaction center heterodimer binds P680, the primary electron donor of PSII as well as several subsequent electron acceptors. This is Photosystem II protein D1 from Rhodomonas salina (Cryptomonas salina).